Reading from the N-terminus, the 769-residue chain is Serine protease HtrA-like (769 aa).

Residues 1-20 (MDIGKKHVIPKSQYRRKRRE) are compositionally biased toward basic residues. The interval 1–388 (MDIGKKHVIP…KKATSKLNKG (388 aa)) is disordered. Basic and acidic residues-rich tracts occupy residues 21 to 64 (FFHN…ERFK), 71 to 87 (LEQR…EESK), and 96 to 108 (YNKD…DVSK). Residues 126–139 (YEQNTEATLSTNST) show a composition bias toward polar residues. Basic and acidic residues predominate over residues 140-186 (DKVESTDMRKLSSDKNKVGHEEQHVLSKPSEHDKETRIDFESSRTDS). A compositionally biased stretch (polar residues) spans 247-262 (QQSQNEQTKTYTYGDS). 2 stretches are compositionally biased toward basic and acidic residues: residues 264–296 (QNDK…HIVD) and 310–330 (KIDD…HKQN). The segment covering 331–347 (ADSSETVGYQSQSSASH) has biased composition (polar residues). Positions 348 to 364 (RSTEKRNMAINDHDKLN) are enriched in basic and acidic residues. The segment covering 366–388 (QKPNTKTSANNNQKKATSKLNKG) has biased composition (polar residues). Residues 410–430 (LVILMGIIILIVILNAIFNNV) form a helical membrane-spanning segment. Residues His504, Asp534, and Ser619 each act as charge relay system in the active site. In terms of domain architecture, PDZ spans 680-733 (IASLNSFERQAVKLLGKVKNGVVVDQVDNNGLADQSGLKKGDVITELDGKLLED).

It belongs to the peptidase S1C family.

The protein resides in the cell membrane. In Staphylococcus aureus (strain MRSA252), this protein is Serine protease HtrA-like.